A 463-amino-acid polypeptide reads, in one-letter code: Dipeptidyl peptidase 1 (463 aa).

The signal sequence occupies residues 1 to 24 (MGPWSGSRLVALLLLVYGAGSVRG). N-linked (GlcNAc...) asparagine glycans are attached at residues asparagine 29 and asparagine 53. 2 disulfide bridges follow: cysteine 30-cysteine 118 and cysteine 54-cysteine 136. A propeptide spanning residues 135-230 (ACFTGRKTGN…TAEIQKKILH (96 aa)) is cleaved from the precursor. Asparagine 144 is a glycosylation site (N-linked (GlcNAc...) asparagine). Cystine bridges form between cysteine 255–cysteine 298, cysteine 291–cysteine 331, and cysteine 321–cysteine 337. Cysteine 258 is a catalytic residue. A glycan (N-linked (GlcNAc...) asparagine) is linked at asparagine 276. Chloride is bound by residues phenylalanine 302 and tyrosine 304. Residue tyrosine 347 coordinates chloride. Catalysis depends on residues histidine 405 and asparagine 427.

Belongs to the peptidase C1 family. As to quaternary structure, tetramer of heterotrimers consisting of exclusion domain, heavy- and light chains. Requires chloride as cofactor.

The protein localises to the lysosome. The enzyme catalyses Release of an N-terminal dipeptide, Xaa-Yaa-|-Zaa-, except when Xaa is Arg or Lys, or Yaa or Zaa is Pro.. In terms of biological role, thiol protease. Has dipeptidylpeptidase activity. Active against a broad range of dipeptide substrates composed of both polar and hydrophobic amino acids. Proline cannot occupy the P1 position and arginine cannot occupy the P2 position of the substrate. Can act as both an exopeptidase and endopeptidase. Activates serine proteases such as elastase, cathepsin G and granzymes A and B. The chain is Dipeptidyl peptidase 1 (CTSC) from Bos taurus (Bovine).